The chain runs to 128 residues: Glycine cleavage system H protein (128 aa).

Positions 22 to 104 (TALVGVTDYA…YASGWLVKIK (83 aa)) constitute a Lipoyl-binding domain. Lys63 is modified (N6-lipoyllysine).

The protein belongs to the GcvH family. The glycine cleavage system is composed of four proteins: P, T, L and H. (R)-lipoate serves as cofactor.

Functionally, the glycine cleavage system catalyzes the degradation of glycine. The H protein shuttles the methylamine group of glycine from the P protein to the T protein. This chain is Glycine cleavage system H protein, found in Halothermothrix orenii (strain H 168 / OCM 544 / DSM 9562).